Reading from the N-terminus, the 297-residue chain is Large ribosomal subunit protein uL15m (297 aa).

Residues 1 to 22 (MAGPVRGAAGPWALDLLRALPR) constitute a mitochondrion transit peptide. The tract at residues 27 to 68 (NLRPNPGSRKPERRRRGQRRGRKCGRGHKGERQRGTRPRLGF) is disordered. Positions 37–53 (PERRRRGQRRGRKCGRG) are enriched in basic residues.

The protein belongs to the universal ribosomal protein uL15 family. In terms of assembly, component of the mitochondrial ribosome large subunit (39S) which comprises a 16S rRNA and about 50 distinct proteins.

Its subcellular location is the mitochondrion. The sequence is that of Large ribosomal subunit protein uL15m (MRPL15) from Bos taurus (Bovine).